We begin with the raw amino-acid sequence, 305 residues long: Secreted mono- and diacylglycerol lipase A (305 aa).

The N-terminal stretch at 1 to 26 (MRLSFFTALSAVASLGYALPGKLQSR) is a signal peptide. Disulfide bonds link cysteine 62–cysteine 67 and cysteine 129–cysteine 132. Serine 171 (nucleophile) is an active-site residue. Aspartate 225 serves as the catalytic Charge relay system. A glycan (N-linked (GlcNAc...) asparagine) is linked at asparagine 251. Histidine 285 (charge relay system) is an active-site residue. A propeptide spans 303–305 (KRV) (removed in mature form).

Belongs to the AB hydrolase superfamily. Lipase family. Class 3 subfamily. Post-translationally, multiple forms of this lipase are due to the presence of different carbohydrates, which may contribute to the stability of this lipase but not to the enzyme activity.

The protein resides in the secreted. It catalyses the reaction a monoacylglycerol + H2O = glycerol + a fatty acid + H(+). The catalysed reaction is a diacylglycerol + H2O = a monoacylglycerol + a fatty acid + H(+). With respect to regulation, both Fe(3+) and Hg(2+) inhibit the activity significantly. Secreted lipase strictly specific to mono- and diacylglycerol, but not triacylglycerol. Hydrolyzes long-chain monoacylglycerols most efficiently with the highest activities observed on 1- and 3- monopalmitoyl-sn-glycerol or 1-monostearoyl-rac-glycerol. Prefers to attack alpha positions to beta positions of monoacylglycerol, but shows no stereospecificity on mono- and diacylglycerol. This Penicillium camembertii protein is Secreted mono- and diacylglycerol lipase A.